Reading from the N-terminus, the 341-residue chain is S-adenosylmethionine:tRNA ribosyltransferase-isomerase (341 aa).

This sequence belongs to the QueA family. In terms of assembly, monomer.

It is found in the cytoplasm. The enzyme catalyses 7-aminomethyl-7-carbaguanosine(34) in tRNA + S-adenosyl-L-methionine = epoxyqueuosine(34) in tRNA + adenine + L-methionine + 2 H(+). It participates in tRNA modification; tRNA-queuosine biosynthesis. Transfers and isomerizes the ribose moiety from AdoMet to the 7-aminomethyl group of 7-deazaguanine (preQ1-tRNA) to give epoxyqueuosine (oQ-tRNA). The polypeptide is S-adenosylmethionine:tRNA ribosyltransferase-isomerase (Clostridium kluyveri (strain NBRC 12016)).